Reading from the N-terminus, the 364-residue chain is Methylthioribose-1-phosphate isomerase (364 aa).

Substrate is bound by residues 53–55 (RGA), Arg90, and Gln200. Residue Asp241 is the Proton donor of the active site. Residue 251-252 (NK) coordinates substrate.

Belongs to the eIF-2B alpha/beta/delta subunits family. MtnA subfamily.

It carries out the reaction 5-(methylsulfanyl)-alpha-D-ribose 1-phosphate = 5-(methylsulfanyl)-D-ribulose 1-phosphate. Its pathway is amino-acid biosynthesis; L-methionine biosynthesis via salvage pathway; L-methionine from S-methyl-5-thio-alpha-D-ribose 1-phosphate: step 1/6. Its function is as follows. Catalyzes the interconversion of methylthioribose-1-phosphate (MTR-1-P) into methylthioribulose-1-phosphate (MTRu-1-P). The protein is Methylthioribose-1-phosphate isomerase of Methylobacterium nodulans (strain LMG 21967 / CNCM I-2342 / ORS 2060).